A 623-amino-acid chain; its full sequence is Keratin, type I cytoskeletal 9 (623 aa).

Over residues Met-1–Arg-13 the composition is skewed to low complexity. The segment at Met-1–Gly-25 is disordered. Residues Met-1 to Asn-152 are head. A phosphoserine mark is found at Ser-14 and Ser-57. The segment covering Ser-14 to Gly-25 has biased composition (gly residues). The tract at residues Glu-153–Trp-188 is coil 1A. The 313-residue stretch at Glu-153–Phe-465 folds into the IF rod domain. The interval Tyr-189–Thr-207 is linker 1. The segment at Ile-208–Leu-299 is coil 1B. The interval Thr-300–Thr-322 is linker 12. Residues Leu-323–Gly-461 form a coil 2 region. Disordered regions lie at residues Gln-462–Ser-496 and Tyr-534–Ser-623. Positions Gln-462–Ser-623 are tail. A compositionally biased stretch (gly residues) spans Gly-471–Ser-496.

This sequence belongs to the intermediate filament family. In terms of assembly, heterotetramer of two type I and two type II keratins. As to expression, expressed in the terminally differentiated epidermis of palms and soles.

In terms of biological role, may serve an important special function either in the mature palmar and plantar skin tissue or in the morphogenetic program of the formation of these tissues. Plays a role in keratin filament assembly. The chain is Keratin, type I cytoskeletal 9 (KRT9) from Homo sapiens (Human).